The following is a 153-amino-acid chain: Large ribosomal subunit protein bL9 (153 aa).

Belongs to the bacterial ribosomal protein bL9 family.

Binds to the 23S rRNA. The sequence is that of Large ribosomal subunit protein bL9 from Synechococcus sp. (strain JA-3-3Ab) (Cyanobacteria bacterium Yellowstone A-Prime).